The chain runs to 293 residues: Small ribosomal subunit biogenesis GTPase RsgA 2 (293 aa).

The CP-type G domain maps to Ser-63–Leu-223. GTP contacts are provided by residues Thr-112–Asp-115 and Gly-166–Ser-174. Positions 247, 252, 254, and 260 each coordinate Zn(2+).

This sequence belongs to the TRAFAC class YlqF/YawG GTPase family. RsgA subfamily. In terms of assembly, monomer. Associates with 30S ribosomal subunit, binds 16S rRNA. Requires Zn(2+) as cofactor.

It localises to the cytoplasm. In terms of biological role, one of several proteins that assist in the late maturation steps of the functional core of the 30S ribosomal subunit. Helps release RbfA from mature subunits. May play a role in the assembly of ribosomal proteins into the subunit. Circularly permuted GTPase that catalyzes slow GTP hydrolysis, GTPase activity is stimulated by the 30S ribosomal subunit. The polypeptide is Small ribosomal subunit biogenesis GTPase RsgA 2 (Oceanobacillus iheyensis (strain DSM 14371 / CIP 107618 / JCM 11309 / KCTC 3954 / HTE831)).